The following is a 331-amino-acid chain: Ketol-acid reductoisomerase (NADP(+)) (331 aa).

In terms of domain architecture, KARI N-terminal Rossmann spans Ala2 to Thr182. NADP(+)-binding positions include Tyr25–Gln28, Ser51, Ser53, and Asp83–Gln86. His108 is an active-site residue. Gly134 is an NADP(+) binding site. One can recognise a KARI C-terminal knotted domain in the interval Asn183–Leu328. Positions 191, 195, 227, and 231 each coordinate Mg(2+). Ser252 contacts substrate.

Belongs to the ketol-acid reductoisomerase family. Requires Mg(2+) as cofactor.

It carries out the reaction (2R)-2,3-dihydroxy-3-methylbutanoate + NADP(+) = (2S)-2-acetolactate + NADPH + H(+). The catalysed reaction is (2R,3R)-2,3-dihydroxy-3-methylpentanoate + NADP(+) = (S)-2-ethyl-2-hydroxy-3-oxobutanoate + NADPH + H(+). Its pathway is amino-acid biosynthesis; L-isoleucine biosynthesis; L-isoleucine from 2-oxobutanoate: step 2/4. It participates in amino-acid biosynthesis; L-valine biosynthesis; L-valine from pyruvate: step 2/4. Involved in the biosynthesis of branched-chain amino acids (BCAA). Catalyzes an alkyl-migration followed by a ketol-acid reduction of (S)-2-acetolactate (S2AL) to yield (R)-2,3-dihydroxy-isovalerate. In the isomerase reaction, S2AL is rearranged via a Mg-dependent methyl migration to produce 3-hydroxy-3-methyl-2-ketobutyrate (HMKB). In the reductase reaction, this 2-ketoacid undergoes a metal-dependent reduction by NADPH to yield (R)-2,3-dihydroxy-isovalerate. The protein is Ketol-acid reductoisomerase (NADP(+)) of Prochlorococcus marinus (strain NATL2A).